The following is a 295-amino-acid chain: Alpha-1A adrenergic receptor (295 aa).

The Extracellular segment spans residues 1–27; that stretch reads MVFLSGNASDSSNCTHPPAPVNISKAI. 3 N-linked (GlcNAc...) asparagine glycosylation sites follow: N7, N13, and N22. The helical transmembrane segment at 28–51 threads the bilayer; that stretch reads LLGVILGGLIIFGVLGNILVILSV. The Cytoplasmic portion of the chain corresponds to 52–64; the sequence is ACHRHLHSVTHYY. Residues 65-88 form a helical membrane-spanning segment; it reads IVNLAVADLLLTSTVLPFSAIFEI. The Extracellular portion of the chain corresponds to 89 to 99; the sequence is LGYWAFGRVFC. Cysteines 99 and 176 form a disulfide. Residues 100-122 traverse the membrane as a helical segment; the sequence is NIWAAVDVLCCTASIMGLCIISI. At 123–143 the chain is on the cytoplasmic side; it reads DRYIGVSYPLRYPTIVTQKRG. Residues 144-167 traverse the membrane as a helical segment; it reads LMALLCVWALSLVISIGPLFGWRQ. Topologically, residues 168–181 are extracellular; the sequence is PAPEDETICQITEE. Residues 182–205 form a helical membrane-spanning segment; the sequence is PGYVLFSALGSFYVPLTIILVMYC. The Cytoplasmic portion of the chain corresponds to 206-273; sequence RVYVVAKRES…FSREKKAAKT (68 aa). Position 215 is a phosphoserine; by PKA (S215). A helical membrane pass occupies residues 274-295; sequence LGIVVGCFVLCWLPFFLVMPIG.

Belongs to the G-protein coupled receptor 1 family. Adrenergic receptor subfamily. ADRA1A sub-subfamily. In terms of assembly, homo- and heterooligomer. Heterooligomerizes with ADRA1B homooligomers in cardiac myocytes. Interacts with CAVIN4.

Its subcellular location is the nucleus membrane. The protein resides in the cell membrane. It is found in the cytoplasm. It localises to the membrane. The protein localises to the caveola. This alpha-adrenergic receptor mediates its action by association with G proteins that activate a phosphatidylinositol-calcium second messenger system. Its effect is mediated by G(q) and G(11) proteins. Nuclear ADRA1A-ADRA1B heterooligomers regulate phenylephrine (PE)-stimulated ERK signaling in cardiac myocytes. The sequence is that of Alpha-1A adrenergic receptor (ADRA1A) from Canis lupus familiaris (Dog).